Reading from the N-terminus, the 431-residue chain is Enolase (431 aa).

Gln168 is a binding site for (2R)-2-phosphoglycerate. Residue Glu210 is the Proton donor of the active site. Mg(2+) contacts are provided by Asp247, Glu291, and Asp318. (2R)-2-phosphoglycerate is bound by residues Lys343, Arg372, Ser373, and Lys394. Lys343 (proton acceptor) is an active-site residue.

Belongs to the enolase family. In terms of assembly, component of the RNA degradosome, a multiprotein complex involved in RNA processing and mRNA degradation. The cofactor is Mg(2+).

Its subcellular location is the cytoplasm. The protein localises to the secreted. The protein resides in the cell surface. It catalyses the reaction (2R)-2-phosphoglycerate = phosphoenolpyruvate + H2O. Its pathway is carbohydrate degradation; glycolysis; pyruvate from D-glyceraldehyde 3-phosphate: step 4/5. In terms of biological role, catalyzes the reversible conversion of 2-phosphoglycerate (2-PG) into phosphoenolpyruvate (PEP). It is essential for the degradation of carbohydrates via glycolysis. In Acinetobacter baumannii (strain SDF), this protein is Enolase.